The following is a 295-amino-acid chain: MTVRVEIRETPGDQEAVLALAEAAAEADGVRPLNEQTLLALRYGGPSGARFLLLYDGDELAGFAYLEPSDPPSGELVVHPGFRGRGLGGRLLAAVLDTGGKGVRLWAHGDLPAAARLAAGFGMTRARALWRMRRPLTTPLPAPELPEGVRLRTFEPGRDEEAWLALNARAFADHPEQGSWTLEDLKRRQQEPWFDPAGFFLAERAGTLVGFHWTKVHAQAEGADGPIGEVYVVGVDPEERGTGLGRALTLAGLAHLRSRGLDQVMLYVDEANTAAVRLYESLGFTRWTVDVMYRR.

2 consecutive N-acetyltransferase domains span residues Val5 to Pro141 and Val149 to Arg295. Residue Glu35 participates in 1D-myo-inositol 2-(L-cysteinylamino)-2-deoxy-alpha-D-glucopyranoside binding. Residue Leu76–Val78 participates in acetyl-CoA binding. Residues Glu176, Lys215, and Glu229 each coordinate 1D-myo-inositol 2-(L-cysteinylamino)-2-deoxy-alpha-D-glucopyranoside. Acetyl-CoA is bound by residues Val233 to Val235 and Arg240 to Arg246. Tyr267 is a binding site for 1D-myo-inositol 2-(L-cysteinylamino)-2-deoxy-alpha-D-glucopyranoside. Position 272–277 (Asn272–Arg277) interacts with acetyl-CoA.

The protein belongs to the acetyltransferase family. MshD subfamily. Monomer.

The enzyme catalyses 1D-myo-inositol 2-(L-cysteinylamino)-2-deoxy-alpha-D-glucopyranoside + acetyl-CoA = mycothiol + CoA + H(+). Catalyzes the transfer of acetyl from acetyl-CoA to desacetylmycothiol (Cys-GlcN-Ins) to form mycothiol. In Thermobispora bispora (strain ATCC 19993 / DSM 43833 / CBS 139.67 / JCM 10125 / KCTC 9307 / NBRC 14880 / R51), this protein is Mycothiol acetyltransferase.